Consider the following 173-residue polypeptide: Putative phosphoesterase GK0864 (173 aa).

The active-site Proton donor is His34. 2 consecutive short sequence motifs (HXTX) follow at residues 34–37 (HITL) and 115–118 (HITI). His115 serves as the catalytic Proton acceptor.

It belongs to the 2H phosphoesterase superfamily. YjcG family.

The polypeptide is Putative phosphoesterase GK0864 (Geobacillus kaustophilus (strain HTA426)).